The sequence spans 85 residues: MASFKIVIVCLALLVAVACARRRDMMSDDELDYHYSKRGIPCACDSDGPDIRSASLSGIVWMGSCPSGWKKCKSYYSIVADCCNQ.

An N-terminal signal peptide occupies residues 1 to 20 (MASFKIVIVCLALLVAVACA). The propeptide occupies 21-36 (RRRDMMSDDELDYHYS). Cystine bridges form between Cys42-Cys82, Cys44-Cys72, and Cys65-Cys83.

This sequence belongs to the sea anemone sodium channel inhibitory toxin family. Type II subfamily. Expressed in ectodermal glands and in clumps outside of the extodermal layer. Is not expressed in nematocytes. In adult female tissues, shows similar expression levels in mesenteries (gametes-producing tissue), tentacles, pharynx and physa.

Its subcellular location is the secreted. Functionally, binds to site 3 of voltage-gated sodium channels and inhibits the inactivation process. Is highly active on DmNav1/TipE (drosophila) and is only extremely weakly active on rat Nav1.4-beta-1/SCN4A-SCN1B, and on human Nav1.5-beta-1/SCN5A-beta-1. This reveals high specificity for arthropod over mammalian channels. In vivo, when released into the medium, this recombinant toxin induces impaired swimming, paralysis and death of the crustacean A.nauplii within several hours. Also causes paralysis of cherry shrimps immediately after injection at very low doses. Its effect on zebrafish (D.rerio) larvae is also rapid, since it induces tail twitching accompanied by impaired swimming after 20 minutes and complete paralysis within 45 minutes. It has also been observed to cause death of zebrafish larvae within 1 hour. The polypeptide is N.vectensis toxin 1 6 (Nematostella vectensis (Starlet sea anemone)).